The following is a 382-amino-acid chain: MRSLAILGSTGSIGLSTLDVVRQHPEKFKIAGLAEGHDVALLAEQIKEFLPAAVSVRDADSVKKLQTLLGSHKPEIFHGLEGAAAIASAEGVDMVVSAIVGAAGLLPTVSAIKAGKHIALANKETLVVAGKLVSDLVKKHNVHLLPVDSEHSAIFQSLAGHRAEDVERIILTASGGPFRNTSAEELKNVTLEQALKHPQWTMGAKITIDSATMMNKGLEVIEAHWLFSMPAEKIGVVVHPQSIIHSMVEYIDGCVIAQLGSPDMRAPIAYALSWPERSESGIHKLDLPKIGTLTFEEPDMERFPALRLAFEALKAGLTYPAVLNAANEIAVAAFLDRKIGFTDIAATVEKTMQAHEAYDPIELDEYLQADRWAREMAKKFIA.

Positions 10, 11, 12, 13, 36, and 122 each coordinate NADPH. K123 serves as a coordination point for 1-deoxy-D-xylulose 5-phosphate. E124 is a binding site for NADPH. A Mn(2+)-binding site is contributed by D148. 1-deoxy-D-xylulose 5-phosphate is bound by residues S149, E150, S174, and H197. E150 contacts Mn(2+). Residue G203 coordinates NADPH. 1-deoxy-D-xylulose 5-phosphate is bound by residues S210, N215, K216, and E219. E219 is a Mn(2+) binding site.

It belongs to the DXR family. Requires Mg(2+) as cofactor. It depends on Mn(2+) as a cofactor.

It catalyses the reaction 2-C-methyl-D-erythritol 4-phosphate + NADP(+) = 1-deoxy-D-xylulose 5-phosphate + NADPH + H(+). It participates in isoprenoid biosynthesis; isopentenyl diphosphate biosynthesis via DXP pathway; isopentenyl diphosphate from 1-deoxy-D-xylulose 5-phosphate: step 1/6. Functionally, catalyzes the NADPH-dependent rearrangement and reduction of 1-deoxy-D-xylulose-5-phosphate (DXP) to 2-C-methyl-D-erythritol 4-phosphate (MEP). The chain is 1-deoxy-D-xylulose 5-phosphate reductoisomerase from Pelodictyon phaeoclathratiforme (strain DSM 5477 / BU-1).